Reading from the N-terminus, the 482-residue chain is Islet cell autoantigen 1-like protein (482 aa).

The region spanning 44-247 (ASDAELDAKL…TARMMSQIHE (204 aa)) is the AH domain. 2 disordered regions span residues 365 to 393 (TQECQTAFGSPSASLTSQEPSMGSEPLAH) and 427 to 449 (SHTDNQPVPSQSPKKLTRSPNNG). 2 stretches are compositionally biased toward polar residues: residues 366-385 (QECQTAFGSPSASLTSQEPS) and 428-449 (HTDNQPVPSQSPKKLTRSPNNG).

This Homo sapiens (Human) protein is Islet cell autoantigen 1-like protein (ICA1L).